The sequence spans 182 residues: Small ribosomal subunit protein uS4c (182 aa).

The S4 RNA-binding domain maps to 82 to 143 (MRLDNILFRL…KERSKVLIQN (62 aa)).

Belongs to the universal ribosomal protein uS4 family. Part of the 30S ribosomal subunit. Contacts protein S5. The interaction surface between S4 and S5 is involved in control of translational fidelity.

The protein resides in the plastid. The protein localises to the chloroplast. Functionally, one of the primary rRNA binding proteins, it binds directly to 16S rRNA where it nucleates assembly of the body of the 30S subunit. Its function is as follows. With S5 and S12 plays an important role in translational accuracy. This Neomarica sp. (strain Lejeune 1997) protein is Small ribosomal subunit protein uS4c (rps4).